The following is a 309-amino-acid chain: Ferrochelatase (309 aa).

Fe cation-binding residues include His185 and Glu262.

It belongs to the ferrochelatase family.

The protein resides in the cytoplasm. It carries out the reaction heme b + 2 H(+) = protoporphyrin IX + Fe(2+). It participates in porphyrin-containing compound metabolism; protoheme biosynthesis; protoheme from protoporphyrin-IX: step 1/1. Its function is as follows. Catalyzes the ferrous insertion into protoporphyrin IX. The chain is Ferrochelatase from Campylobacter jejuni subsp. jejuni serotype O:23/36 (strain 81-176).